We begin with the raw amino-acid sequence, 553 residues long: Heterochromatin protein 1-binding protein 3 (553 aa).

Ala2 is subject to N-acetylalanine. Ser6 carries the post-translational modification Phosphoserine. Disordered regions lie at residues 29–134 (KLGE…KTIP) and 140–159 (SASQLARAQKQTPMASSPRP). Thr51 carries the phosphothreonine modification. Positions 60 to 71 (GEEEKPEPDISS) are enriched in acidic residues. Lys64 is covalently cross-linked (Glycyl lysine isopeptide (Lys-Gly) (interchain with G-Cter in SUMO2)). Thr85 is subject to Phosphothreonine. Positions 94 to 127 (EQPKGEPENEEKEENKSSEETKKDEKDQSKEKEK) are enriched in basic and acidic residues. Residue Lys97 forms a Glycyl lysine isopeptide (Lys-Gly) (interchain with G-Cter in SUMO2) linkage. Polar residues predominate over residues 140-154 (SASQLARAQKQTPMA). Phosphoserine occurs at positions 142, 155, and 156. The region spanning 157 to 232 (PRPKMDAILT…GASGSFVVVQ (76 aa)) is the H15 1 domain. At Lys190 the chain carries N6-acetyllysine. The segment at 230 to 255 (VVQKSRKTPQKSRNRKNRSSAVDPEP) is disordered. A compositionally biased stretch (basic residues) spans 233–247 (KSRKTPQKSRNRKNR). A phosphoserine mark is found at Ser248 and Ser249. A PxVxL motif motif is present at residues 255-259 (PQVKL). 2 H15 domains span residues 255-330 (PQVK…QLKK) and 337-413 (LGGS…QLCF). A Glycyl lysine isopeptide (Lys-Gly) (interchain with G-Cter in SUMO2) cross-link involves residue Lys258. Residues 422–553 (LFPKKEPDDS…TMKKSFRVKK (132 aa)) are disordered. The span at 430-450 (DSRDEDEDEDESSEEDSEDEE) shows a compositional bias: acidic residues. Phosphoserine is present on residues Ser441, Ser442, and Ser446. Positions 489–510 (GKARPLPKKAPPKAKTPAKKTR) are enriched in basic residues. Over residues 517-527 (KKPSGGSSKKP) the composition is skewed to low complexity. The span at 543–553 (STMKKSFRVKK) shows a compositional bias: basic residues.

As to quaternary structure, interacts (via PxVxL motif) with CBX5 (via Trp-174).

It is found in the nucleus. The protein localises to the chromosome. Its function is as follows. Component of heterochromatin that maintains heterochromatin integrity during G1/S progression and regulates the duration of G1 phase to critically influence cell proliferative capacity. Mediates chromatin condensation during hypoxia, leading to increased tumor cell viability, radio-resistance, chemo-resistance and self-renewal. This Homo sapiens (Human) protein is Heterochromatin protein 1-binding protein 3 (HP1BP3).